A 106-amino-acid polypeptide reads, in one-letter code: Large ribosomal subunit protein bL21c (106 aa).

It belongs to the bacterial ribosomal protein bL21 family. Part of the 50S ribosomal subunit.

It localises to the plastid. The protein localises to the chloroplast. Its function is as follows. This protein binds to 23S rRNA. This Gracilaria tenuistipitata var. liui (Red alga) protein is Large ribosomal subunit protein bL21c.